The primary structure comprises 363 residues: Aminomethyltransferase (363 aa).

It belongs to the GcvT family. In terms of assembly, the glycine cleavage system is composed of four proteins: P, T, L and H.

It catalyses the reaction N(6)-[(R)-S(8)-aminomethyldihydrolipoyl]-L-lysyl-[protein] + (6S)-5,6,7,8-tetrahydrofolate = N(6)-[(R)-dihydrolipoyl]-L-lysyl-[protein] + (6R)-5,10-methylene-5,6,7,8-tetrahydrofolate + NH4(+). In terms of biological role, the glycine cleavage system catalyzes the degradation of glycine. This is Aminomethyltransferase from Teredinibacter turnerae (strain ATCC 39867 / T7901).